Consider the following 330-residue polypeptide: Glycerol-3-phosphate dehydrogenase [NAD(P)+] (330 aa).

Residues tryptophan 11, arginine 33, and lysine 105 each contribute to the NADPH site. Residues lysine 105, glycine 133, and serine 135 each contribute to the sn-glycerol 3-phosphate site. Residue alanine 137 participates in NADPH binding. Residues lysine 188, aspartate 241, serine 251, arginine 252, and asparagine 253 each coordinate sn-glycerol 3-phosphate. Lysine 188 functions as the Proton acceptor in the catalytic mechanism. Arginine 252 is a binding site for NADPH. Residues valine 276 and glutamate 278 each contribute to the NADPH site.

This sequence belongs to the NAD-dependent glycerol-3-phosphate dehydrogenase family.

The protein localises to the cytoplasm. The catalysed reaction is sn-glycerol 3-phosphate + NAD(+) = dihydroxyacetone phosphate + NADH + H(+). The enzyme catalyses sn-glycerol 3-phosphate + NADP(+) = dihydroxyacetone phosphate + NADPH + H(+). It functions in the pathway membrane lipid metabolism; glycerophospholipid metabolism. Its function is as follows. Catalyzes the reduction of the glycolytic intermediate dihydroxyacetone phosphate (DHAP) to sn-glycerol 3-phosphate (G3P), the key precursor for phospholipid synthesis. In Acidovorax ebreus (strain TPSY) (Diaphorobacter sp. (strain TPSY)), this protein is Glycerol-3-phosphate dehydrogenase [NAD(P)+].